The chain runs to 181 residues: uncharacterized protein (181 aa).

This is an uncharacterized protein from Enterobacteria phage T4 (Bacteriophage T4).